A 114-amino-acid polypeptide reads, in one-letter code: Protein preY, mitochondrial (114 aa).

A mitochondrion-targeting transit peptide spans M1–P35. The interval R14 to D49 is disordered. A compositionally biased stretch (basic and acidic residues) spans L36–D49. A TRM112 domain is found at D51 to Q97.

It belongs to the PREY family. Interacts (via TRM112 domain) with NDUFAF5; the interaction is direct and stabilizes NDUFAF5 protein. Interacts with COQ5; the interaction is direct, stabilizes COQ5 protein and associates PYURF with COQ enzyme complex.

The protein resides in the mitochondrion. Its function is as follows. In mitochondria, S-adenosylmethionine-dependent methyltransferase chaperone that supports both coenzyme Q biosynthesis, by stabilizing its components, such as COQ5, and NADH:ubiquinone oxidoreductase complex (complex I, MT-ND1) assembly, by stabilizing complex I assembly factors, such as NDUFAF5. The sequence is that of Protein preY, mitochondrial from Homo sapiens (Human).